The primary structure comprises 139 residues: Ribonuclease P protein component (139 aa).

This sequence belongs to the RnpA family. Consists of a catalytic RNA component (M1 or rnpB) and a protein subunit.

It catalyses the reaction Endonucleolytic cleavage of RNA, removing 5'-extranucleotides from tRNA precursor.. Functionally, RNaseP catalyzes the removal of the 5'-leader sequence from pre-tRNA to produce the mature 5'-terminus. It can also cleave other RNA substrates such as 4.5S RNA. The protein component plays an auxiliary but essential role in vivo by binding to the 5'-leader sequence and broadening the substrate specificity of the ribozyme. This chain is Ribonuclease P protein component, found in Chlamydia felis (strain Fe/C-56) (Chlamydophila felis).